A 222-amino-acid chain; its full sequence is Adapter protein MecA (222 aa).

This sequence belongs to the MecA family. Homodimer.

In terms of biological role, enables the recognition and targeting of unfolded and aggregated proteins to the ClpC protease or to other proteins involved in proteolysis. This is Adapter protein MecA from Lysinibacillus sphaericus (strain C3-41).